A 156-amino-acid polypeptide reads, in one-letter code: Endoribonuclease YbeY (156 aa).

Zn(2+)-binding residues include His-122, His-126, and His-132.

This sequence belongs to the endoribonuclease YbeY family. Zn(2+) serves as cofactor.

Its subcellular location is the cytoplasm. Functionally, single strand-specific metallo-endoribonuclease involved in late-stage 70S ribosome quality control and in maturation of the 3' terminus of the 16S rRNA. This is Endoribonuclease YbeY from Bacillus cereus (strain ATCC 10987 / NRS 248).